A 343-amino-acid chain; its full sequence is UDP-N-acetylglucosamine--N-acetylmuramyl-(pentapeptide) pyrophosphoryl-undecaprenol N-acetylglucosamine transferase (343 aa).

Residues 10–12 (TGG), N113, S174, and Q275 contribute to the UDP-N-acetyl-alpha-D-glucosamine site.

The protein belongs to the glycosyltransferase 28 family. MurG subfamily.

The protein resides in the cell membrane. It carries out the reaction di-trans,octa-cis-undecaprenyl diphospho-N-acetyl-alpha-D-muramoyl-L-alanyl-D-glutamyl-meso-2,6-diaminopimeloyl-D-alanyl-D-alanine + UDP-N-acetyl-alpha-D-glucosamine = di-trans,octa-cis-undecaprenyl diphospho-[N-acetyl-alpha-D-glucosaminyl-(1-&gt;4)]-N-acetyl-alpha-D-muramoyl-L-alanyl-D-glutamyl-meso-2,6-diaminopimeloyl-D-alanyl-D-alanine + UDP + H(+). Its pathway is cell wall biogenesis; peptidoglycan biosynthesis. Cell wall formation. Catalyzes the transfer of a GlcNAc subunit on undecaprenyl-pyrophosphoryl-MurNAc-pentapeptide (lipid intermediate I) to form undecaprenyl-pyrophosphoryl-MurNAc-(pentapeptide)GlcNAc (lipid intermediate II). In Wolbachia sp. subsp. Drosophila simulans (strain wRi), this protein is UDP-N-acetylglucosamine--N-acetylmuramyl-(pentapeptide) pyrophosphoryl-undecaprenol N-acetylglucosamine transferase.